The primary structure comprises 62 residues: Photosystem II reaction center protein Z (62 aa).

The next 2 membrane-spanning stretches (helical) occupy residues A8–A28 and F41–I61.

Belongs to the PsbZ family. PSII is composed of 1 copy each of membrane proteins PsbA, PsbB, PsbC, PsbD, PsbE, PsbF, PsbH, PsbI, PsbJ, PsbK, PsbL, PsbM, PsbT, PsbY, PsbZ, Psb30/Ycf12, at least 3 peripheral proteins of the oxygen-evolving complex and a large number of cofactors. It forms dimeric complexes.

Its subcellular location is the plastid. The protein localises to the chloroplast thylakoid membrane. May control the interaction of photosystem II (PSII) cores with the light-harvesting antenna, regulates electron flow through the 2 photosystem reaction centers. PSII is a light-driven water plastoquinone oxidoreductase, using light energy to abstract electrons from H(2)O, generating a proton gradient subsequently used for ATP formation. The sequence is that of Photosystem II reaction center protein Z from Daucus carota (Wild carrot).